Consider the following 2493-residue polypeptide: MVTPAASQDPPAIPARQNASATAAMAVNAKDTVEQERNVVLLFGCQWLTFTASDFRQLRKAVLDNPELHWMLDVLSELPGYYRAAAGTSCVPSLRAIRGEEDLRELERWFRCDDLSTAKFPLCYTQLAPLLMMTHFVQYSQWLKMQPNGRNPVVEIVGFCIGLLSSIAVSATRMGSLKMYGSVAMRLAMLLGAMGDLQQAGEEYTSLAIGWKRPELEDELPAERALTEQSYITVQYDENRATIMAPRRSVAALQQTLQSAGFSANAVEYNGRYHWPGHEKSLTPLIHLCNTHSGLQLPDASELLHPPRANSTAEPVRSGCLHELVLRAVLAQQCLWHKTFSAVYREHLTTPSSIVVEFGPERCVPPTLFRRLPQRIVHFADVELPATISRDHELATRPPAETDIAIVGMACRVAGADDLDEFWDLLCSGQSQHREMPRERYANYETPWRPEASHRSWLGNFVRDIDAFDHKFFRKSPREAMSQDPQQRLMLQVAYQALESAGYFSQPSPGKDIGCFIATCTVDYEHNVNCHPASAYAATGLLRSFLAGKLSHHFGWRGPSLCVDTACSGSAVALHHACRAILSGDCTAALVGGANAITSPLAYDNLAGASFLSPTGPCKPFDAKADGYCRGEGFAAIYIKKLSHAIADGDQVLATIASTAVEQNDNCTPIVVPDTASLAGLFKKVTQRAHLHSRDISIVEAHGTGTQAGDPAEYESVRDVLGGPRRVGNLALGSVKGLVGHTEGVSGIIALCKVVLMILNGQIPPQPGFHSLNPHIRAMPDDHIEIGTRVKPWEVGFRAALINNYGACGSNASMVITQGPQKDEVQERGIHAENVALPFRVCGLDKARLQAYAARLRRFLSRSERGISFANIAFNLTRKSNPALECQCVFQTRSESELKDILTGLEEGDNKYIIQVKKPKRPLVLCFGGQVGRSIGLDRTFYNAFPLFKHHLDSCDDILKANGDSSIYPGIFATAPVLDIVQLHTQLFALQYACARSWMDCGVEVTAVIGHSFGELTALCISGALSLPDALTLIVRRAVLIRDKWGADPGAMLAVEGDRSTLEKHLESSSANIACFNGPRSFTVAGPTAVIDFLQEELGADSAFRLKRLEVTNAFHSTLVDPLLPALASAIDGLALNTATIPIERATEHQAADTIPLSIVADHLRQPVYFNNAVQRLAARHGPAIWLEAGSNSTITSLARRALGLGVSGNTFHSVNVTSTSALMNLTDVTVGLWSDNVPCTFWGYHARQTREYAPLLLPPYQFERTRHWMENKPLPLKYNQAQAVMEVSGHTAAKTAPIAPATLLLDYAIELLRSLPNNQRKIPRVFDVGSDAPLLLDSNREVWIEVSAEDDKRTWALRFQSQTKGGQSDSRLLHCTAHISMHDVRCSRLQTEFTQYARLVSHARCADLLTDPEVDDILQGRNVYRSFAEIVEYSEQYQGVKRLVGKGRESAGRVVKSYSGKTWADPFLCDSFSQCAGFWVNCMTDRAEDEVYVASGIEQWMRTPLYADMATARPDTWHVWARHQQSEGLYTSDVFVFTPDGELVEMFLGLRYSRVAKSLFTRLLRGSTLKVDCRTKDTANQENNSIKDLVSRVKAVVAEICAVKPSEIQDDSHLADAGVDSLMAMELARELEVAFKCTIALEALVEAETFHDLVQAVQSALGETYEDSSVCSGNQCSTTDEATEFPSTSWSITSVSDTADLVLPLDGVLDALDETKGLTDQFLADNKCSGRLLNFTPLMVEMCIVLTLEALEELGSNIRSARANDRLPRIEFDTQHGPLVEYLYGRLLEAGLIKLDGSTVIRTEICAPTESSSTLLHKIEREYPEYGGASKLTFYTGSRLASVLRGEQDGLQLIFGTAEGQRLVSWMYGDEPHNVAGYKLMGEFIRRLVDKLPPAAAREGMTLRILEMGAGTGGGTKWMLPLLAALPVPVEYTFSDISPAFLAQARRKFRDYQFVRYCVHDIEKPPSEDLGKYHIIMASNAVHATSNLQVSTGNMRQALRPDGVLMLLEMTRPVFAIDLVFGLFRGWWVFNDGRTHAITNEQRWKDDLQAVGYGHVDWTDGESNEVGVQRVIFATAGGEQYHPVSPQEDAARLRTVVEYVYQHTAGFTMPALPPRIRAPANHACILVTGATGSLGSHLVARLVQLSNVQAVICLNRVSRMGPRVRQKEAVAARGLSLESKEETKLMVIETDTANDRMGLSVEQCRYLQENVTHIIHNAWPMNGAAPLSKFEGQFRALRNLIDLARCIATAQRHPVRFQFISSIGTVNGGGALEERTRIEQVMSNGYNEAKFVCERMIHETLQRYPAVFQATIVRPGQISGSEETGYWNTAEHFPAMVKSSQSLGAFPSLAGRLGWTPVDVAARIIAELLLDEGIPEEIYHVDHPTGQNWTTVVDVLAEELEATEVPFKDWIQRVRNRGGSRENPAGFMADWLETNFERMSCQGPLDTRVARRHSKTLREMGGGGGDEHVRRVVRSWKECGFLTQAQTRQGIP.

The segment at 129–243 (PLLMMTHFVQ…VQYDENRATI (115 aa)) is N-terminal acylcarrier protein transacylase domain (SAT). Cysteine 160 (nucleophile; for transacylase activity) is an active-site residue. Histidine 274 functions as the Proton donor/acceptor; for transacylase activity in the catalytic mechanism. Positions 401-818 (ETDIAIVGMA…GSNASMVITQ (418 aa)) constitute a Ketosynthase family 3 (KS3) domain. Catalysis depends on for beta-ketoacyl synthase activity residues cysteine 567, histidine 702, and histidine 741. The segment at 926–1261 (CFGGQVGRSI…EYAPLLLPPY (336 aa)) is malonyl-CoA:ACP transacylase (MAT). Positions 1259–1387 (PPYQFERTRH…AHISMHDVRC (129 aa)) are N-terminal hotdog fold. One can recognise a PKS/mFAS DH domain in the interval 1259-1562 (PPYQFERTRH…YSRVAKSLFT (304 aa)). Histidine 1291 acts as the Proton acceptor; for dehydratase activity in catalysis. A product template (PT) domain region spans residues 1297–1558 (APIAPATLLL…LGLRYSRVAK (262 aa)). Residues 1415–1562 (VDDILQGRNV…YSRVAKSLFT (148 aa)) are C-terminal hotdog fold. Aspartate 1471 functions as the Proton donor; for dehydratase activity in the catalytic mechanism. Residues 1588–1662 (KDLVSRVKAV…DLVQAVQSAL (75 aa)) enclose the Carrier domain. Residue serine 1622 is modified to O-(pantetheine 4'-phosphoryl)serine. Residues 1822–2063 (REYPEYGGAS…YGHVDWTDGE (242 aa)) are methyltransferase (CMeT) domain. Positions 2128–2366 (VTGATGSLGS…TPVDVAARII (239 aa)) are NADPH-binding domain.

Requires pantetheine 4'-phosphate as cofactor.

The catalysed reaction is decanoyl-[ACP] + 4 malonyl-CoA + AH2 + S-adenosyl-L-methionine + 3 H(+) = 2,4-dihydroxy-3-methyl-6-(2-oxoundecyl)benzaldehyde + holo-[ACP] + A + S-adenosyl-L-homocysteine + 4 CO2 + 4 CoA + H2O. Its pathway is secondary metabolite biosynthesis. Its function is as follows. Non-reducing polyketide synthase; part of the pki gene cluster that mediates the biosynthesis of 2,4-dihydroxy-3-methyl-6-(2-oxoundecyl)benzaldehyde. The first step in the pathway is the generation of the decanoyl starter unit by the FAS composed of subunits pkiB and pkiC, which is then transferred directly from the FAS to the SAT domain of the non-reducing polyketide synthase pkiA. PkiA condenses the decanoyyl starter unit with 4 malonyl-CoA units and performs one methylation step to yield 2,4-dihydroxy-3-methyl-6-(2-oxoundecyl)benzaldehyde. This Emericella nidulans (strain FGSC A4 / ATCC 38163 / CBS 112.46 / NRRL 194 / M139) (Aspergillus nidulans) protein is Non-reducing polyketide synthase pkiA.